The chain runs to 235 residues: Ribonuclease S-2 (235 aa).

Residues 1 to 31 form the signal peptide; the sequence is MATVQKSQHSHFFLLVGCIVHLSNFCSTTTA. An RNA-binding site is contributed by Q41. A disulfide bridge connects residues C47 and C54. An RNA-binding site is contributed by H66. Residue H66 is the Proton donor of the active site. N72 carries N-linked (GlcNAc...) asparagine glycosylation. 3 cysteine pairs are disulfide-bonded: C80–C129, C189–C217, and C200–C211. RNA-binding positions include 105 to 106, R108, and F118; that span reads DL. Q122 is a catalytic residue. Residue 125 to 126 participates in RNA binding; that stretch reads KH. The active-site Proton acceptor is the H126.

Belongs to the RNase T2 family.

The protein localises to the secreted. It localises to the extracellular space. It catalyses the reaction a ribonucleotidyl-ribonucleotide-RNA + H2O = a 3'-end 3'-phospho-ribonucleotide-RNA + a 5'-end dephospho-ribonucleoside-RNA + H(+). In terms of biological role, self-incompatibility (SI) is the inherited ability of a flowering plant to prevent self-fertilization by discriminating between self and non-self pollen during pollination. In many species, self-incompatibility is controlled by the single, multiallelic locus S. The protein is Ribonuclease S-2 (S2) of Antirrhinum hispanicum (Snapdragon).